The chain runs to 357 residues: Anthranilate phosphoribosyltransferase (357 aa).

5-phospho-alpha-D-ribose 1-diphosphate contacts are provided by residues Gly94, 97–98 (GD), Thr102, 104–107 (NLST), 122–130 (KHGNRAASS), and Gly134. Gly94 lines the anthranilate pocket. Ser106 contacts Mg(2+). Asn125 provides a ligand contact to anthranilate. Residue Arg180 participates in anthranilate binding. The Mg(2+) site is built by Asp238 and Glu239.

This sequence belongs to the anthranilate phosphoribosyltransferase family. In terms of assembly, homodimer. The cofactor is Mg(2+).

The enzyme catalyses N-(5-phospho-beta-D-ribosyl)anthranilate + diphosphate = 5-phospho-alpha-D-ribose 1-diphosphate + anthranilate. It participates in amino-acid biosynthesis; L-tryptophan biosynthesis; L-tryptophan from chorismate: step 2/5. Its function is as follows. Catalyzes the transfer of the phosphoribosyl group of 5-phosphorylribose-1-pyrophosphate (PRPP) to anthranilate to yield N-(5'-phosphoribosyl)-anthranilate (PRA). The chain is Anthranilate phosphoribosyltransferase from Mycobacterium sp. (strain JLS).